Consider the following 328-residue polypeptide: UPF0194 membrane protein YE2891 (328 aa).

The N-terminal stretch at 1–22 is a signal peptide; sequence MNRKKIIVAVVIVALLAAIGYG. 2 coiled-coil regions span residues 80–109 and 139–208; these read YVNA…REEE and ANKA…TTLL.

Belongs to the UPF0194 family.

It localises to the periplasm. In Yersinia enterocolitica serotype O:8 / biotype 1B (strain NCTC 13174 / 8081), this protein is UPF0194 membrane protein YE2891.